A 475-amino-acid chain; its full sequence is Ribulose bisphosphate carboxylase large chain (475 aa).

Positions 1–2 (MS) are excised as a propeptide. At P3 the chain carries N-acetylproline. Position 14 is an N6,N6,N6-trimethyllysine (K14). 2 residues coordinate substrate: N123 and T173. The active-site Proton acceptor is K175. K177 is a substrate binding site. Mg(2+) is bound by residues K201, D203, and E204. Position 201 is an N6-carboxylysine (K201). The active-site Proton acceptor is the H294. Substrate is bound by residues R295, H327, and S379.

This sequence belongs to the RuBisCO large chain family. Type I subfamily. Heterohexadecamer of 8 large chains and 8 small chains; disulfide-linked. The disulfide link is formed within the large subunit homodimers. Requires Mg(2+) as cofactor. The disulfide bond which can form in the large chain dimeric partners within the hexadecamer appears to be associated with oxidative stress and protein turnover.

It localises to the plastid. Its subcellular location is the chloroplast. The catalysed reaction is 2 (2R)-3-phosphoglycerate + 2 H(+) = D-ribulose 1,5-bisphosphate + CO2 + H2O. The enzyme catalyses D-ribulose 1,5-bisphosphate + O2 = 2-phosphoglycolate + (2R)-3-phosphoglycerate + 2 H(+). Its function is as follows. RuBisCO catalyzes two reactions: the carboxylation of D-ribulose 1,5-bisphosphate, the primary event in carbon dioxide fixation, as well as the oxidative fragmentation of the pentose substrate in the photorespiration process. Both reactions occur simultaneously and in competition at the same active site. The sequence is that of Ribulose bisphosphate carboxylase large chain from Illicium oligandrum (Star anise).